The primary structure comprises 209 residues: Pyridoxal 5'-phosphate synthase subunit PdxT (209 aa).

Residue 58–60 (GES) coordinates L-glutamine. The active-site Nucleophile is the cysteine 90. L-glutamine is bound by residues arginine 119 and 148-149 (IR). Residues histidine 185 and glutamate 187 each act as charge relay system in the active site.

The protein belongs to the glutaminase PdxT/SNO family. In terms of assembly, in the presence of PdxS, forms a dodecamer of heterodimers. Only shows activity in the heterodimer.

The catalysed reaction is aldehydo-D-ribose 5-phosphate + D-glyceraldehyde 3-phosphate + L-glutamine = pyridoxal 5'-phosphate + L-glutamate + phosphate + 3 H2O + H(+). It catalyses the reaction L-glutamine + H2O = L-glutamate + NH4(+). Its pathway is cofactor biosynthesis; pyridoxal 5'-phosphate biosynthesis. Functionally, catalyzes the hydrolysis of glutamine to glutamate and ammonia as part of the biosynthesis of pyridoxal 5'-phosphate. The resulting ammonia molecule is channeled to the active site of PdxS. The sequence is that of Pyridoxal 5'-phosphate synthase subunit PdxT from Clavibacter sepedonicus (Clavibacter michiganensis subsp. sepedonicus).